A 224-amino-acid chain; its full sequence is Twisted gastrulation protein homolog 1 (224 aa).

A signal peptide spans 1 to 26 (MRSPCAALSASLLLLLLLLWARSSVG). N-linked (GlcNAc...) asparagine glycosylation is found at N53, N82, and N148.

It belongs to the twisted gastrulation protein family. As to quaternary structure, interacts with CHRD and BMP4. This interaction enhances CHRD/BMP4 complex formation. Interacts with BMP7.

Its subcellular location is the secreted. Functionally, may be involved in dorsoventral axis formation. Seems to antagonize BMP signaling by forming ternary complexes with CHRD and BMPs, thereby preventing BMPs from binding to their receptors. In addition to the anti-BMP function, also has pro-BMP activity, partly mediated by cleavage and degradation of CHRD, which releases BMPs from ternary complexes. May be an important modulator of BMP-regulated cartilage development and chondrocyte differentiation. May play a role in thymocyte development. This Gallus gallus (Chicken) protein is Twisted gastrulation protein homolog 1 (TWSG1).